The primary structure comprises 648 residues: MINITFPDGAVREFESGITTFDIAQSISNSLAKKALAGKFNGQLIDTNRPIDTDGSIEIVTPDHEDAFGVLRHSAAHLFAQAAKRLFPDIHLGVGPAIAEGFYYDTDNSSGQISNEDLPRIEAEMQKIVKENYPCIREEVTKEEALEIFKDDPYKIELINEHSDDAAGLTIYRQGEFVDLCRGPHVPSTGRIQVFHLLNVAGAYWRGNSDNAMMQRVYGTAWFDKKDLKAYLTRLEEAKERDHRKLGKELDLFMISQEVGQGLPFWLPDGATIRRTLERYITDKELASGYQHVYTPPLASVELYKTSGHWEHYQEDMFPTMDMGDGEEFVLRPMNCPHHIQVYKNHVHSYRELPIRIAELGMMHRYEKSGALSGLQRVREMTLNDGHLFVTPEQIQEEFQRALQLIIDVYEDFNLTDYRFRLSYRDPKDTEKYYDNDEMWENAQSMLKAALDEMGVEYFEAEGEAAFYGPKLDIQVKTALGNEETLSTIQLDFLLPERFDLKYIGADGEEHRPVMIHRGVISTMERFTAILIETYKGAFPTWLAPHQVTVIPISNEAHIDYAWEVAKALRDRGIRADVDDRNEKMQYKIRASQTSKIPYQLIVGDKEMEDKSVNVRRYGSKATHTESLSEFMDTILADIARKSRPVED.

Residues 1-61 enclose the TGS domain; it reads MINITFPDGA…DTDGSIEIVT (61 aa). The interval 242–540 is catalytic; the sequence is DHRKLGKELD…LIETYKGAFP (299 aa). The Zn(2+) site is built by cysteine 336, histidine 387, and histidine 517.

It belongs to the class-II aminoacyl-tRNA synthetase family. As to quaternary structure, homodimer. Zn(2+) is required as a cofactor.

The protein localises to the cytoplasm. The enzyme catalyses tRNA(Thr) + L-threonine + ATP = L-threonyl-tRNA(Thr) + AMP + diphosphate + H(+). In terms of biological role, catalyzes the attachment of threonine to tRNA(Thr) in a two-step reaction: L-threonine is first activated by ATP to form Thr-AMP and then transferred to the acceptor end of tRNA(Thr). Also edits incorrectly charged L-seryl-tRNA(Thr). This chain is Threonine--tRNA ligase, found in Streptococcus uberis (strain ATCC BAA-854 / 0140J).